A 307-amino-acid chain; its full sequence is 4-hydroxythreonine-4-phosphate dehydrogenase (307 aa).

The substrate site is built by His-126 and Thr-127. A divalent metal cation contacts are provided by His-156, His-195, and His-251. Substrate is bound by residues Lys-259, Asn-268, and Arg-277.

The protein belongs to the PdxA family. Homodimer. It depends on Zn(2+) as a cofactor. Mg(2+) serves as cofactor. The cofactor is Co(2+).

Its subcellular location is the cytoplasm. The enzyme catalyses 4-(phosphooxy)-L-threonine + NAD(+) = 3-amino-2-oxopropyl phosphate + CO2 + NADH. The protein operates within cofactor biosynthesis; pyridoxine 5'-phosphate biosynthesis; pyridoxine 5'-phosphate from D-erythrose 4-phosphate: step 4/5. In terms of biological role, catalyzes the NAD(P)-dependent oxidation of 4-(phosphooxy)-L-threonine (HTP) into 2-amino-3-oxo-4-(phosphooxy)butyric acid which spontaneously decarboxylates to form 3-amino-2-oxopropyl phosphate (AHAP). The protein is 4-hydroxythreonine-4-phosphate dehydrogenase of Helicobacter pylori (strain J99 / ATCC 700824) (Campylobacter pylori J99).